We begin with the raw amino-acid sequence, 121 residues long: UPF0344 protein BCA_1194 (121 aa).

A run of 4 helical transmembrane segments spans residues 6-26 (ITAW…YSAG), 38-58 (LMYI…MKTA), 65-85 (WYGL…MVLV), and 92-112 (ATGA…YLGL).

This sequence belongs to the UPF0344 family.

It is found in the cell membrane. In Bacillus cereus (strain 03BB102), this protein is UPF0344 protein BCA_1194.